A 403-amino-acid polypeptide reads, in one-letter code: Phosphopentomutase (403 aa).

Mn(2+) is bound by residues Asp-13, Asp-298, His-303, Asp-339, His-340, and His-351.

It belongs to the phosphopentomutase family. Mn(2+) is required as a cofactor.

It localises to the cytoplasm. It catalyses the reaction 2-deoxy-alpha-D-ribose 1-phosphate = 2-deoxy-D-ribose 5-phosphate. It carries out the reaction alpha-D-ribose 1-phosphate = D-ribose 5-phosphate. The protein operates within carbohydrate degradation; 2-deoxy-D-ribose 1-phosphate degradation; D-glyceraldehyde 3-phosphate and acetaldehyde from 2-deoxy-alpha-D-ribose 1-phosphate: step 1/2. Functionally, isomerase that catalyzes the conversion of deoxy-ribose 1-phosphate (dRib-1-P) and ribose 1-phosphate (Rib-1-P) to deoxy-ribose 5-phosphate (dRib-5-P) and ribose 5-phosphate (Rib-5-P), respectively. The polypeptide is Phosphopentomutase (Streptococcus pneumoniae serotype 4 (strain ATCC BAA-334 / TIGR4)).